The chain runs to 218 residues: Small ribosomal subunit protein mS34 (218 aa).

Belongs to the mitochondrion-specific ribosomal protein mS34 family. As to quaternary structure, component of the mitochondrial ribosome small subunit (28S) which comprises a 12S rRNA and about 30 distinct proteins. As to expression, widely expressed (at protein liver).

The protein localises to the mitochondrion. Functionally, required for mitochondrial translation, plays a role in maintaining the stability of the small ribosomal subunit and the 12S rRNA that are required for mitoribosome formation. This chain is Small ribosomal subunit protein mS34 (Mrps34), found in Mus musculus (Mouse).